Reading from the N-terminus, the 332-residue chain is Hdr-like menaquinol oxidoreductase cytochrome b-like subunit (332 aa).

5 consecutive transmembrane segments (helical) span residues 3 to 23, 97 to 117, 143 to 163, 177 to 197, and 230 to 250; these read GVIF…IGVI, DARW…LVLI, VFIP…FLLW, LPSD…GNVM, and IEPI…YFPF.

In terms of assembly, consists of five subunits: an integral membrane subunit, a cytochrome b-like subunit, a cytochrome c subunit and two iron-sulfur subunits.

Its subcellular location is the cell membrane. Its function is as follows. Has menaquinol-oxidizing activity. HmeC and HmeD subunits may together mediate electron transfer from menaquinol to an unidentified electron acceptor on the cytoplasmic side of the membrane. The chain is Hdr-like menaquinol oxidoreductase cytochrome b-like subunit (hmeC) from Archaeoglobus fulgidus (strain ATCC 49558 / DSM 4304 / JCM 9628 / NBRC 100126 / VC-16).